The primary structure comprises 199 residues: MATLLQIKSSLFGDNGNSSQLANEFVERWKTQNPNGEVVIRDFAKEDVPHLDATRVQALFTPAEQRTAEQQAVVEYSDKIIAEIQAADAIVLGVPLYNFGIPSTLKAYFDHIARAGVTFKYTETGPVGLLTDKPVYILAARGGIYKGQPSDTQSRYLVDFLNFVGLKDIHFIYAEGLNMGQKDQAFASAKHEIEQEIAA.

Ser-10 is a binding site for FMN.

It belongs to the azoreductase type 1 family. As to quaternary structure, homodimer. The cofactor is FMN.

It catalyses the reaction 2 a quinone + NADH + H(+) = 2 a 1,4-benzosemiquinone + NAD(+). The enzyme catalyses N,N-dimethyl-1,4-phenylenediamine + anthranilate + 2 NAD(+) = 2-(4-dimethylaminophenyl)diazenylbenzoate + 2 NADH + 2 H(+). In terms of biological role, quinone reductase that provides resistance to thiol-specific stress caused by electrophilic quinones. Its function is as follows. Also exhibits azoreductase activity. Catalyzes the reductive cleavage of the azo bond in aromatic azo compounds to the corresponding amines. This is FMN-dependent NADH:quinone oxidoreductase from Cellvibrio japonicus (strain Ueda107) (Pseudomonas fluorescens subsp. cellulosa).